We begin with the raw amino-acid sequence, 577 residues long: Origin recognition complex subunit 2 (577 aa).

One copy of the Involved in LRWD1-binding repeat lies at 1-100 (MSKPELKEDK…GNKVYSFQNR (100 aa)). The interval 81–199 (SLKNGSATGG…DDEGVAQEHE (119 aa)) is disordered. The residue at position 116 (T116) is a Phosphothreonine. Residues S122 and S138 each carry the phosphoserine modification. A compositionally biased stretch (basic and acidic residues) spans 143 to 157 (SASDKVQPKNNDKSE). Over residues 188-199 (SEDDEGVAQEHE) the composition is skewed to acidic residues. Position 226 is a phosphothreonine (T226). Phosphoserine occurs at positions 248 and 280.

It belongs to the ORC2 family. In terms of assembly, component of ORC, a complex composed of at least 6 subunits: ORC1, ORC2, ORC3, ORC4, ORC5 and ORC6. ORC is regulated in a cell-cycle dependent manner. It is sequentially assembled at the exit from anaphase of mitosis and disassembled as cells enter S phase. Interacts with DBF4. Interacts with MCM10. Interacts with LRWD1 throughout the cell cycle; this interaction, which occurs only with non-ubiquitinated form of LRWD1, prevents LRWD1 ubiquitination and hence stabilizes the protein. Interacts with POLQ.

The protein resides in the nucleus. In terms of biological role, component of the origin recognition complex (ORC) that binds origins of replication. DNA-binding is ATP-dependent. The specific DNA sequences that define origins of replication have not been identified yet. ORC is required to assemble the pre-replication complex necessary to initiate DNA replication. Binds histone H3 and H4 trimethylation marks H3K9me3, H3K20me3 and H4K27me3. Stabilizes LRWD1, by protecting it from ubiquitin-mediated proteasomal degradation. Also stabilizes ORC3. The sequence is that of Origin recognition complex subunit 2 (ORC2) from Homo sapiens (Human).